We begin with the raw amino-acid sequence, 167 residues long: 18.8 kDa class II heat shock protein (167 aa).

Residues D49 to A167 form the sHSP domain.

This sequence belongs to the small heat shock protein (HSP20) family.

It is found in the cytoplasm. The sequence is that of 18.8 kDa class II heat shock protein (SHSP-2) from Ipomoea nil (Japanese morning glory).